We begin with the raw amino-acid sequence, 102 residues long: PE family immunomodulator PE15 (102 aa).

Residues 3 to 91 enclose the PE domain; that stretch reads LRVVPESLAG…SGASYAARDA (89 aa).

This sequence belongs to the mycobacterial PE family.

The protein localises to the secreted. The protein resides in the cell envelope. It is found in the cell surface. Functionally, may play a pivotal role in the evasion of host immune response by M.tuberculosis. Mediates production of IL-10 via activation of the p38 and ERK1/2 mitogen-activated protein kinase (MAPK) signaling pathways. The sequence is that of PE family immunomodulator PE15 (PE15) from Mycobacterium tuberculosis (strain CDC 1551 / Oshkosh).